The sequence spans 222 residues: PKHD-type hydroxylase Syncc9902_2001 (222 aa).

Positions 80–174 (RVHSILISRS…RLVCVGWIES (95 aa)) constitute a Fe2OG dioxygenase domain. Fe cation contacts are provided by histidine 98, aspartate 100, and histidine 155. Arginine 165 serves as a coordination point for 2-oxoglutarate.

The cofactor is Fe(2+). Requires L-ascorbate as cofactor.

The polypeptide is PKHD-type hydroxylase Syncc9902_2001 (Synechococcus sp. (strain CC9902)).